Reading from the N-terminus, the 292-residue chain is ATP synthase gamma chain (292 aa).

It belongs to the ATPase gamma chain family. As to quaternary structure, F-type ATPases have 2 components, CF(1) - the catalytic core - and CF(0) - the membrane proton channel. CF(1) has five subunits: alpha(3), beta(3), gamma(1), delta(1), epsilon(1). CF(0) has three main subunits: a, b and c.

It localises to the cell inner membrane. Its function is as follows. Produces ATP from ADP in the presence of a proton gradient across the membrane. The gamma chain is believed to be important in regulating ATPase activity and the flow of protons through the CF(0) complex. The polypeptide is ATP synthase gamma chain (Methylobacterium nodulans (strain LMG 21967 / CNCM I-2342 / ORS 2060)).